We begin with the raw amino-acid sequence, 227 residues long: Endonuclease V (227 aa).

Asp46 and Asp114 together coordinate Mg(2+).

Belongs to the endonuclease V family. Mg(2+) serves as cofactor.

It is found in the cytoplasm. The catalysed reaction is Endonucleolytic cleavage at apurinic or apyrimidinic sites to products with a 5'-phosphate.. Its function is as follows. DNA repair enzyme involved in the repair of deaminated bases. Selectively cleaves double-stranded DNA at the second phosphodiester bond 3' to a deoxyinosine leaving behind the intact lesion on the nicked DNA. The protein is Endonuclease V of Alkalilimnicola ehrlichii (strain ATCC BAA-1101 / DSM 17681 / MLHE-1).